We begin with the raw amino-acid sequence, 579 residues long: YTH domain-containing family protein 2 (579 aa).

A disordered region spans residues 1 to 45 (MSASSLLEQRPKGQGNKVQNGSVHQKDGLNDDDFEPYLSPQARPN). N-acetylserine is present on serine 2. Phosphoserine is present on residues serine 2, serine 4, serine 5, serine 22, serine 39, and serine 196. Positions 2-384 (SASSLLEQRP…QAGSGSTPSE (383 aa)) are localization to mRNA processing bodies (P-bodies). The interval 247–387 (AKQQPKLKTK…SGSTPSEPHP (141 aa)) is disordered. A compositionally biased stretch (polar residues) spans 291-316 (ALVQNIGQPTQGSPQHVGQQANNSPP). A compositionally biased stretch (low complexity) spans 337 to 349 (AQLSVQQQAAQPT). Phosphoserine is present on serine 359. The span at 359-371 (SGFGHNGVDGNGV) shows a compositional bias: gly residues. Residues 372-383 (GQSQAGSGSTPS) show a composition bias toward polar residues. Residues 385-579 (PHPVLEKLRS…VKKERQGRGK (195 aa)) form an interaction with m6A-containing mRNAs region. Serine 394 is modified (phosphoserine). The region spanning 410–544 (GRVFIIKSYS…EKAKQVLKII (135 aa)) is the YTH domain. RNA is bound by residues 416–418 (KSY), aspartate 422, 432–433 (WC), asparagine 462, tryptophan 486, and tryptophan 491.

Belongs to the YTHDF family. YTHDF2 subfamily. In terms of assembly, interacts with CNOT1; interaction is direct and promotes recruitment of the CCR4-NOT complex. Interacts with YTHDF3. Interacts with RIDA/HRSP12; interaction leads to recruitment of the ribonuclease P/MRP complex. In terms of processing, ubiquitinated by the SCF(SKP2) complex, leading to its degradation.

Its subcellular location is the cytoplasm. It localises to the cytosol. The protein localises to the P-body. The protein resides in the stress granule. It is found in the nucleus. In terms of biological role, specifically recognizes and binds N6-methyladenosine (m6A)-containing RNAs, and regulates their stability. M6A is a modification present at internal sites of mRNAs and some non-coding RNAs and plays a role in mRNA stability and processing. Acts as a regulator of mRNA stability by promoting degradation of m6A-containing mRNAs via interaction with the CCR4-NOT and ribonuclease P/MRP complexes, depending on the context. The YTHDF paralogs (YTHDF1, YTHDF2 and YTHDF3) share m6A-containing mRNAs targets and act redundantly to mediate mRNA degradation and cellular differentiation. M6A-containing mRNAs containing a binding site for RIDA/HRSP12 (5'-GGUUC-3') are preferentially degraded by endoribonucleolytic cleavage: cooperative binding of RIDA/HRSP12 and YTHDF2 to transcripts leads to recruitment of the ribonuclease P/MRP complex. Other m6A-containing mRNAs undergo deadenylation via direct interaction between YTHDF2 and CNOT1, leading to recruitment of the CCR4-NOT and subsequent deadenylation of m6A-containing mRNAs. Required maternally to regulate oocyte maturation: probably acts by binding to m6A-containing mRNAs, thereby regulating maternal transcript dosage during oocyte maturation, which is essential for the competence of oocytes to sustain early zygotic development. Also required during spermatogenesis: regulates spermagonial adhesion by promoting degradation of m6A-containing transcripts coding for matrix metallopeptidases. Also involved in hematopoietic stem cells specification by binding to m6A-containing mRNAs, leading to promote their degradation. Also acts as a regulator of neural development by promoting m6A-dependent degradation of neural development-related mRNA targets. Inhibits neural specification of induced pluripotent stem cells by binding to methylated neural-specific mRNAs and promoting their degradation, thereby restraining neural differentiation. Regulates circadian regulation of hepatic lipid metabolism: acts by promoting m6A-dependent degradation of PPARA transcripts. Regulates the innate immune response to infection by inhibiting the type I interferon response: acts by binding to m6A-containing IFNB transcripts and promoting their degradation. May also act as a promoter of cap-independent mRNA translation following heat shock stress: upon stress, relocalizes to the nucleus and specifically binds mRNAs with some m6A methylation mark at their 5'-UTR, protecting demethylation of mRNAs by FTO, thereby promoting cap-independent mRNA translation. Regulates mitotic entry by promoting the phase-specific m6A-dependent degradation of WEE1 transcripts. Promotes formation of phase-separated membraneless compartments, such as P-bodies or stress granules, by undergoing liquid-liquid phase separation upon binding to mRNAs containing multiple m6A-modified residues: polymethylated mRNAs act as a multivalent scaffold for the binding of YTHDF proteins, juxtaposing their disordered regions and thereby leading to phase separation. The resulting mRNA-YTHDF complexes then partition into different endogenous phase-separated membraneless compartments, such as P-bodies, stress granules or neuronal RNA granules. May also recognize and bind RNAs modified by C5-methylcytosine (m5C) and act as a regulator of rRNA processing. The polypeptide is YTH domain-containing family protein 2 (Macaca fascicularis (Crab-eating macaque)).